The sequence spans 92 residues: UPF0473 protein BCE33L4129 (92 aa).

It belongs to the UPF0473 family.

This chain is UPF0473 protein BCE33L4129, found in Bacillus cereus (strain ZK / E33L).